Here is a 326-residue protein sequence, read N- to C-terminus: Phosphate acyltransferase (326 aa).

It belongs to the PlsX family. Homodimer. Probably interacts with PlsY.

It is found in the cytoplasm. It carries out the reaction a fatty acyl-[ACP] + phosphate = an acyl phosphate + holo-[ACP]. It participates in lipid metabolism; phospholipid metabolism. Catalyzes the reversible formation of acyl-phosphate (acyl-PO(4)) from acyl-[acyl-carrier-protein] (acyl-ACP). This enzyme utilizes acyl-ACP as fatty acyl donor, but not acyl-CoA. The sequence is that of Phosphate acyltransferase from Macrococcus caseolyticus (strain JCSC5402) (Macrococcoides caseolyticum).